The primary structure comprises 427 residues: Four-jointed box protein 1 (427 aa).

A signal peptide spans 1–18 (MRALSANLFAVLLMCALA). 3 N-linked (GlcNAc...) asparagine glycosylation sites follow: Asn-81, Asn-244, and Asn-270.

It is found in the secreted. Functionally, may act as an inhibitor of dendrite extension and branching. The chain is Four-jointed box protein 1 (fjx1) from Xiphophorus maculatus (Southern platyfish).